A 334-amino-acid polypeptide reads, in one-letter code: Holliday junction branch migration complex subunit RuvB (334 aa).

The segment at 4–184 (ADRLIQPQIQ…FGIPLRLEFY (181 aa)) is large ATPase domain (RuvB-L). ATP-binding positions include R24, G65, K68, T69, T70, 131–133 (EDY), R174, Y184, and R221. Residue T69 participates in Mg(2+) binding. A small ATPAse domain (RuvB-S) region spans residues 185 to 255 (NIKDLSTIVT…VAEHALDLLD (71 aa)). The tract at residues 258-334 (SEGFDYMDRK…YQHFELIKPE (77 aa)) is head domain (RuvB-H). DNA contacts are provided by R294, R313, and R318.

The protein belongs to the RuvB family. In terms of assembly, homohexamer. Forms an RuvA(8)-RuvB(12)-Holliday junction (HJ) complex. HJ DNA is sandwiched between 2 RuvA tetramers; dsDNA enters through RuvA and exits via RuvB. An RuvB hexamer assembles on each DNA strand where it exits the tetramer. Each RuvB hexamer is contacted by two RuvA subunits (via domain III) on 2 adjacent RuvB subunits; this complex drives branch migration. In the full resolvosome a probable DNA-RuvA(4)-RuvB(12)-RuvC(2) complex forms which resolves the HJ.

It localises to the cytoplasm. It carries out the reaction ATP + H2O = ADP + phosphate + H(+). In terms of biological role, the RuvA-RuvB-RuvC complex processes Holliday junction (HJ) DNA during genetic recombination and DNA repair, while the RuvA-RuvB complex plays an important role in the rescue of blocked DNA replication forks via replication fork reversal (RFR). RuvA specifically binds to HJ cruciform DNA, conferring on it an open structure. The RuvB hexamer acts as an ATP-dependent pump, pulling dsDNA into and through the RuvAB complex. RuvB forms 2 homohexamers on either side of HJ DNA bound by 1 or 2 RuvA tetramers; 4 subunits per hexamer contact DNA at a time. Coordinated motions by a converter formed by DNA-disengaged RuvB subunits stimulates ATP hydrolysis and nucleotide exchange. Immobilization of the converter enables RuvB to convert the ATP-contained energy into a lever motion, pulling 2 nucleotides of DNA out of the RuvA tetramer per ATP hydrolyzed, thus driving DNA branch migration. The RuvB motors rotate together with the DNA substrate, which together with the progressing nucleotide cycle form the mechanistic basis for DNA recombination by continuous HJ branch migration. Branch migration allows RuvC to scan DNA until it finds its consensus sequence, where it cleaves and resolves cruciform DNA. This Shewanella baltica (strain OS195) protein is Holliday junction branch migration complex subunit RuvB.